A 236-amino-acid polypeptide reads, in one-letter code: 1-(5-phosphoribosyl)-5-[(5-phosphoribosylamino)methylideneamino] imidazole-4-carboxamide isomerase (236 aa).

Asp-8 functions as the Proton acceptor in the catalytic mechanism. Catalysis depends on Asp-127, which acts as the Proton donor.

It belongs to the HisA/HisF family.

It localises to the cytoplasm. The catalysed reaction is 1-(5-phospho-beta-D-ribosyl)-5-[(5-phospho-beta-D-ribosylamino)methylideneamino]imidazole-4-carboxamide = 5-[(5-phospho-1-deoxy-D-ribulos-1-ylimino)methylamino]-1-(5-phospho-beta-D-ribosyl)imidazole-4-carboxamide. The protein operates within amino-acid biosynthesis; L-histidine biosynthesis; L-histidine from 5-phospho-alpha-D-ribose 1-diphosphate: step 4/9. The sequence is that of 1-(5-phosphoribosyl)-5-[(5-phosphoribosylamino)methylideneamino] imidazole-4-carboxamide isomerase from Campylobacter concisus (strain 13826).